A 105-amino-acid chain; its full sequence is Large ribosomal subunit protein uL24 (105 aa).

Belongs to the universal ribosomal protein uL24 family. Part of the 50S ribosomal subunit.

Functionally, one of two assembly initiator proteins, it binds directly to the 5'-end of the 23S rRNA, where it nucleates assembly of the 50S subunit. One of the proteins that surrounds the polypeptide exit tunnel on the outside of the subunit. The chain is Large ribosomal subunit protein uL24 from Aeromonas hydrophila subsp. hydrophila (strain ATCC 7966 / DSM 30187 / BCRC 13018 / CCUG 14551 / JCM 1027 / KCTC 2358 / NCIMB 9240 / NCTC 8049).